Consider the following 630-residue polypeptide: CREB-regulated transcription coactivator 1 (630 aa).

Phosphoserine is present on residues serine 64 and serine 113. Disordered stretches follow at residues alanine 142–aspartate 174, glycine 187–isoleucine 221, serine 256–leucine 331, and glutamine 356–threonine 475. Threonine 149 carries the phosphothreonine modification. Phosphoserine; by SIK1 and SIK2 is present on serine 151. The span at serine 151–serine 167 shows a compositional bias: polar residues. At threonine 161 the chain carries Phosphothreonine. Positions glutamate 194–lysine 208 are enriched in basic and acidic residues. Positions threonine 242–leucine 258 match the Nuclear export signal motif. The span at serine 256 to proline 270 shows a compositional bias: pro residues. Composition is skewed to polar residues over residues glycine 292–glutamine 301 and leucine 310–leucine 331. Positions glutamine 361–glutamine 384 are enriched in pro residues. The segment covering valine 385–proline 394 has biased composition (low complexity). Polar residues-rich tracts occupy residues valine 414–proline 426 and proline 450–threonine 475.

Belongs to the TORC family. In terms of assembly, binds, as a tetramer, through its N-terminal region, with the bZIP domain of CREB1. 'Arg-314' in the bZIP domain of CREB1 is essential for this interaction. Interaction, via its C-terminal, with TAF4, enhances recruitment of TAF4 to CREB1. Interacts with 14-3-3 proteins, including YWHAE/14-3-3 epsilon. Interacts with calmodulin-dependent catalytic subunit PPP3CA/calcineurin A. Post-translationally, phosphorylation/dephosphorylation states of Ser-151 are required for regulating transduction of CREB activity. TORCs are inactive when phosphorylated, and active when dephosphorylated at this site. This primary site of phosphorylation is mediated by SIKs (SIK1 and SIK2), is regulated by cAMP and calcium levels and is dependent on the phosphorylation of SIKs by LKB1. Highly expressed in developing cortical neurons, peaking during dendrite development.

Its subcellular location is the cytoplasm. The protein localises to the nucleus. In terms of biological role, transcriptional coactivator for CREB1 which activates transcription through both consensus and variant cAMP response element (CRE) sites. Acts as a coactivator, in the SIK/TORC signaling pathway, being active when dephosphorylated and acts independently of CREB1 'Ser-133' phosphorylation. Enhances the interaction of CREB1 with TAF4. Regulates the expression of specific CREB-activated genes such as the steroidogenic gene, StAR. Potent coactivator of PGC1alpha and inducer of mitochondrial biogenesis in muscle cells. In the hippocampus, involved in late-phase long-term potentiation (L-LTP) maintenance at the Schaffer collateral-CA1 synapses. May be required for dendritic growth of developing cortical neurons. In concert with SIK1, regulates the light-induced entrainment of the circadian clock. In response to light stimulus, coactivates the CREB-mediated transcription of PER1 which plays an important role in the photic entrainment of the circadian clock. The sequence is that of CREB-regulated transcription coactivator 1 (Crtc1) from Rattus norvegicus (Rat).